The primary structure comprises 127 residues: Interacting with cytoskeleton protein 1 (127 aa).

Its subcellular location is the vacuole membrane. Required for viability of cells lacking mtDNA. The chain is Interacting with cytoskeleton protein 1 (ICY1) from Saccharomyces cerevisiae (strain ATCC 204508 / S288c) (Baker's yeast).